A 242-amino-acid chain; its full sequence is Probable 2-phosphosulfolactate phosphatase (242 aa).

The protein belongs to the ComB family. The cofactor is Mg(2+).

The enzyme catalyses (2R)-O-phospho-3-sulfolactate + H2O = (2R)-3-sulfolactate + phosphate. This Prochlorococcus marinus (strain NATL2A) protein is Probable 2-phosphosulfolactate phosphatase.